A 365-amino-acid chain; its full sequence is 2-aminoethylphosphonate--pyruvate transaminase (365 aa).

Lys194 carries the N6-(pyridoxal phosphate)lysine modification.

The protein belongs to the class-V pyridoxal-phosphate-dependent aminotransferase family. PhnW subfamily. In terms of assembly, homodimer. Pyridoxal 5'-phosphate serves as cofactor.

It catalyses the reaction (2-aminoethyl)phosphonate + pyruvate = phosphonoacetaldehyde + L-alanine. In terms of biological role, involved in phosphonate degradation. The chain is 2-aminoethylphosphonate--pyruvate transaminase from Bacillus cereus (strain Q1).